The sequence spans 427 residues: 3-phosphoshikimate 1-carboxyvinyltransferase (427 aa).

3 residues coordinate 3-phosphoshikimate: Lys22, Ser23, and Arg27. Lys22 is a binding site for phosphoenolpyruvate. Phosphoenolpyruvate contacts are provided by Gly96 and Arg124. 3-phosphoshikimate is bound by residues Ser169, Ser170, Gln171, Ser197, Asp313, Asn336, and Lys340. Gln171 serves as a coordination point for phosphoenolpyruvate. Catalysis depends on Asp313, which acts as the Proton acceptor. The phosphoenolpyruvate site is built by Arg344, Arg386, and Lys411.

This sequence belongs to the EPSP synthase family. In terms of assembly, monomer.

The protein resides in the cytoplasm. The catalysed reaction is 3-phosphoshikimate + phosphoenolpyruvate = 5-O-(1-carboxyvinyl)-3-phosphoshikimate + phosphate. Its pathway is metabolic intermediate biosynthesis; chorismate biosynthesis; chorismate from D-erythrose 4-phosphate and phosphoenolpyruvate: step 6/7. Its function is as follows. Catalyzes the transfer of the enolpyruvyl moiety of phosphoenolpyruvate (PEP) to the 5-hydroxyl of shikimate-3-phosphate (S3P) to produce enolpyruvyl shikimate-3-phosphate and inorganic phosphate. In Salmonella arizonae (strain ATCC BAA-731 / CDC346-86 / RSK2980), this protein is 3-phosphoshikimate 1-carboxyvinyltransferase.